Reading from the N-terminus, the 368-residue chain is tRNA-specific 2-thiouridylase MnmA (368 aa).

Residues 11-18 and Met-37 contribute to the ATP site; that span reads GMSGGVDS. Residues 97 to 99 are interaction with target base in tRNA; sequence NPD. Residue Cys-102 is the Nucleophile of the active site. Cys-102 and Cys-199 are oxidised to a cystine. ATP is bound at residue Gly-127. An interaction with tRNA region spans residues 149-151; the sequence is KDQ. The active-site Cysteine persulfide intermediate is Cys-199. The tract at residues 311-312 is interaction with tRNA; that stretch reads RY.

This sequence belongs to the MnmA/TRMU family. Interacts with TusE.

It is found in the cytoplasm. The catalysed reaction is S-sulfanyl-L-cysteinyl-[protein] + uridine(34) in tRNA + AH2 + ATP = 2-thiouridine(34) in tRNA + L-cysteinyl-[protein] + A + AMP + diphosphate + H(+). Functionally, catalyzes the 2-thiolation of uridine at the wobble position (U34) of tRNA(Lys), tRNA(Glu) and tRNA(Gln), leading to the formation of s(2)U34, the first step of tRNA-mnm(5)s(2)U34 synthesis. Sulfur is provided by IscS, via a sulfur-relay system. Binds ATP and its substrate tRNAs. This is tRNA-specific 2-thiouridylase MnmA from Shigella boydii serotype 18 (strain CDC 3083-94 / BS512).